We begin with the raw amino-acid sequence, 164 residues long: Phosphopantetheine adenylyltransferase (164 aa).

Residue Ser10 participates in substrate binding. Residues 10–11 and His18 contribute to the ATP site; that span reads SF. Residues Lys42, Leu74, and Arg88 each contribute to the substrate site. ATP contacts are provided by residues 89-91, Glu99, and 124-130; these read GLR and YAFLSSS.

The protein belongs to the bacterial CoaD family. In terms of assembly, homohexamer. The cofactor is Mg(2+).

The protein resides in the cytoplasm. The enzyme catalyses (R)-4'-phosphopantetheine + ATP + H(+) = 3'-dephospho-CoA + diphosphate. It functions in the pathway cofactor biosynthesis; coenzyme A biosynthesis; CoA from (R)-pantothenate: step 4/5. Functionally, reversibly transfers an adenylyl group from ATP to 4'-phosphopantetheine, yielding dephospho-CoA (dPCoA) and pyrophosphate. This chain is Phosphopantetheine adenylyltransferase, found in Geobacillus thermodenitrificans (strain NG80-2).